The chain runs to 450 residues: Probable ECA polymerase (450 aa).

11 helical membrane passes run 6–26, 37–57, 63–83, 118–138, 155–175, 181–201, 207–227, 228–248, 341–361, 378–398, and 410–430; these read FSGL…LTWF, VFFS…TSVL, VGVA…CFYA, VILM…NGFL, GVAL…VYFL, AWLF…MIVG, IIIA…ISLW, MLAA…LKRY, LVVM…GLII, YKAA…IVLA, and VFFI…YWLF.

Belongs to the WzyE family. In terms of assembly, probably part of a complex composed of WzxE, WzyE and WzzE.

The protein localises to the cell inner membrane. It functions in the pathway bacterial outer membrane biogenesis; enterobacterial common antigen biosynthesis. In terms of biological role, probably involved in the polymerization of enterobacterial common antigen (ECA) trisaccharide repeat units. The chain is Probable ECA polymerase from Shigella boydii serotype 18 (strain CDC 3083-94 / BS512).